Reading from the N-terminus, the 636-residue chain is Polyadenylate-binding protein 1 (636 aa).

Position 1 is an N-acetylmethionine (Met1). RRM domains are found at residues 11 to 89, 99 to 175, 191 to 268, and 294 to 370; these read ASLY…WSQR, GNIF…RFKS, TNVY…RAQK, and VNLY…LAQR. The tract at residues 166-289 is CSDE1-binding; the sequence is RKVFVGRFKS…FEQMKQDRIT (124 aa). Lys299 is modified (N6-methyllysine). Ser315 carries the phosphoserine modification. A Phosphothreonine modification is found at Thr319. 4 positions are modified to omega-N-methylarginine: Arg385, Arg419, Arg432, and Arg436. Omega-N-methylated arginine; by CARM1 is present on residues Arg455 and Arg460. Omega-N-methylarginine is present on residues Arg475 and Arg481. Arg493 bears the Asymmetric dimethylarginine; alternate mark. Arg493 is modified (dimethylated arginine; alternate). Residue Arg493 is modified to Omega-N-methylarginine; alternate. Omega-N-methylarginine is present on Arg506. Position 512 is an N6-acetyllysine (Lys512). An Omega-N-methylarginine modification is found at Arg518. Residues 542–619 form the PABC domain; sequence QEPLTASMLA…AVAVLQAHQA (78 aa).

Belongs to the polyadenylate-binding protein type-1 family. May form homodimers. Component of a multisubunit autoregulatory ribonucleoprotein complex (ARC), at least composed of IGF2BP1, PABPC1 and CSDE1. Directly interacts with IGF2BP1. Part of a complex associated with the FOS mCRD domain and consisting of HNRPD, SYNCRIP, PAIP1 and CSDE1/UNR. Interacts with PAIP1 and PAIP2 (via the PABPC1-interacting motifs PAM1 and PAM2). Interacts with PAIP1 with a 1:1 stoichiometry and with PAIP2 with a 1:2 stoichiometry. The interaction with CSDE1 is direct and RNA-independent. Found in a mRNP complex with YBX2. Interacts with TENT2/GLD2. Identified in the spliceosome C complex. Identified in a mRNP complex, at least composed of DHX9, DDX3X, ELAVL1, HNRNPU, IGF2BP1, ILF3, PABPC1, PCBP2, PTBP2, STAU1, STAU2, SYNCRIP and YBX1. The interaction with DDX3X is direct and RNA-independent. This interaction increases in stressed cells and decreases during cell recovery. Identified in a IGF2BP1-dependent mRNP granule complex containing untranslated mRNAs. Interacts with NXF1/TAP. Interacts with PIWIL1. Interacts with AGO1, AGO2, GSPT1 and GSPT2. Interacts with LARP4B. Interacts (via the second and third RRM domains and the C-terminus) with PAIP2B (via central acidic portion and C-terminus). Forms a complex with LARP1 and SHFL. Interacts with LARP4. Interacts with ZFC3H1 in a RNase-sensitive manner. Interacts with TRIM71 (via NHL repeats) in an RNA-dependent manner. Interacts with TENT5C; the interaction has no effect on TENT5C poly(A) polymerase function. Interacts with G3BP1 and G3BP2. Interacts with ENDOV; the interaction is RNA-dependent and stimulates ENDOV activity. Interacts with UPF1; the interaction is RNA-dependent. Interacts with IGF2BP2 and IGF2BP3. May interact with SETX. Interacts with RBM46. Interacts with PAN3. Phosphorylated by MAPKAPK2. Post-translationally, methylated by CARM1. Arg-493 is dimethylated, probably to asymmetric dimethylarginine.

Its subcellular location is the cytoplasm. It is found in the stress granule. The protein resides in the nucleus. It localises to the cell projection. The protein localises to the lamellipodium. In terms of biological role, binds the poly(A) tail of mRNA, including that of its own transcript, and regulates processes of mRNA metabolism such as pre-mRNA splicing and mRNA stability. Its function in translational initiation regulation can either be enhanced by PAIP1 or repressed by PAIP2. Can probably bind to cytoplasmic RNA sequences other than poly(A) in vivo. Binds to N6-methyladenosine (m6A)-containing mRNAs and contributes to MYC stability by binding to m6A-containing MYC mRNAs. Involved in translationally coupled mRNA turnover. Implicated with other RNA-binding proteins in the cytoplasmic deadenylation/translational and decay interplay of the FOS mRNA mediated by the major coding-region determinant of instability (mCRD) domain. Involved in regulation of nonsense-mediated decay (NMD) of mRNAs containing premature stop codons; for the recognition of premature termination codons (PTC) and initiation of NMD a competitive interaction between UPF1 and PABPC1 with the ribosome-bound release factors is proposed. By binding to long poly(A) tails, may protect them from uridylation by ZCCHC6/ZCCHC11 and hence contribute to mRNA stability. The sequence is that of Polyadenylate-binding protein 1 (PABPC1) from Pongo abelii (Sumatran orangutan).